The following is a 295-amino-acid chain: Diaminopimelate epimerase (295 aa).

The substrate site is built by N11 and N78. The active-site Proton donor is the C87. Residues 88-89, N163, N199, and 220-221 contribute to the substrate site; these read GN and ER. The active-site Proton acceptor is C229. Position 230-231 (230-231) interacts with substrate; that stretch reads GT.

The protein belongs to the diaminopimelate epimerase family. Homodimer.

The protein resides in the cytoplasm. It carries out the reaction (2S,6S)-2,6-diaminopimelate = meso-2,6-diaminopimelate. Its pathway is amino-acid biosynthesis; L-lysine biosynthesis via DAP pathway; DL-2,6-diaminopimelate from LL-2,6-diaminopimelate: step 1/1. In terms of biological role, catalyzes the stereoinversion of LL-2,6-diaminopimelate (L,L-DAP) to meso-diaminopimelate (meso-DAP), a precursor of L-lysine and an essential component of the bacterial peptidoglycan. The protein is Diaminopimelate epimerase of Mycobacteroides abscessus (strain ATCC 19977 / DSM 44196 / CCUG 20993 / CIP 104536 / JCM 13569 / NCTC 13031 / TMC 1543 / L948) (Mycobacterium abscessus).